The chain runs to 109 residues: Large ribosomal subunit protein uL22 (109 aa).

It belongs to the universal ribosomal protein uL22 family. Part of the 50S ribosomal subunit.

In terms of biological role, this protein binds specifically to 23S rRNA; its binding is stimulated by other ribosomal proteins, e.g. L4, L17, and L20. It is important during the early stages of 50S assembly. It makes multiple contacts with different domains of the 23S rRNA in the assembled 50S subunit and ribosome. Its function is as follows. The globular domain of the protein is located near the polypeptide exit tunnel on the outside of the subunit, while an extended beta-hairpin is found that lines the wall of the exit tunnel in the center of the 70S ribosome. The protein is Large ribosomal subunit protein uL22 of Ralstonia pickettii (strain 12J).